The following is a 167-amino-acid chain: Ammonium/H(+) antiporter subunit AmhM (167 aa).

The 85-residue stretch at 79 to 163 folds into the RCK C-terminal domain; sequence IDRIKLIRKQ…IQKFEELCAC (85 aa).

In terms of assembly, interacts with AmhT.

The protein resides in the cell membrane. Its function is as follows. Modulates the activity of the ammonium/proton antiporter AmhT. In Alkalihalophilus pseudofirmus (strain ATCC BAA-2126 / JCM 17055 / OF4) (Bacillus pseudofirmus), this protein is Ammonium/H(+) antiporter subunit AmhM (amhM).